The primary structure comprises 236 residues: Outer membrane protein P.III (236 aa).

A signal peptide spans 1 to 22 (MTKQLKLSALFVALLASGTAVA). 4 consecutive repeat copies span residues 69–70 (VP), 71–72 (EP), 73–74 (EP), and 75–76 (AP). Positions 69–76 (VPEPEPAP) are 4 X 2 AA tandem repeats of X-P. Residues 86–223 (YVDETISLSA…RVDVKIRSIV (138 aa)) enclose the OmpA-like domain. Cysteine 185 and cysteine 208 form a disulfide bridge.

This sequence belongs to the outer membrane OOP (TC 1.B.6) superfamily.

It localises to the cell outer membrane. The polypeptide is Outer membrane protein P.III (Neisseria gonorrhoeae).